The following is a 1007-amino-acid chain: Serine/threonine-protein kinase PRP4 homolog (1007 aa).

Residues 1 to 102 (MAATEPPSLR…LSPAKRTKLD (102 aa)) form a disordered region. Position 2 is an N-acetylalanine (Ala-2). Residues Ser-8, Ser-21, Ser-24, and Ser-33 each carry the phosphoserine modification. 2 stretches are compositionally biased toward basic residues: residues 40 to 60 (KHSR…KHKH) and 68 to 82 (KKHK…HKRK). The segment covering 83 to 92 (EVIEASDKEG) has biased composition (basic and acidic residues). Phosphoserine occurs at positions 88 and 94. Residue Lys-100 is modified to N6-acetyllysine; alternate. Lys-100 is covalently cross-linked (Glycyl lysine isopeptide (Lys-Gly) (interchain with G-Cter in SUMO2); alternate). Lys-112 participates in a covalent cross-link: Glycyl lysine isopeptide (Lys-Gly) (interchain with G-Cter in SUMO2). Residue Lys-118 forms a Glycyl lysine isopeptide (Lys-Gly) (interchain with G-Cter in SUMO2); alternate linkage. Lys-118 is covalently cross-linked (Glycyl lysine isopeptide (Lys-Gly) (interchain with G-Cter in SUMO1); alternate). Ser-132 bears the Phosphoserine mark. Phosphotyrosine is present on Tyr-141. Disordered stretches follow at residues 141 to 535 (YESG…EDEE) and 560 to 583 (NISV…SPDD). A phosphoserine mark is found at Ser-143, Ser-145, and Ser-167. Residues 158 to 169 (GNRSSTRSSSTR) are compositionally biased toward low complexity. Residues Lys-171 and Lys-178 each participate in a glycyl lysine isopeptide (Lys-Gly) (interchain with G-Cter in SUMO2) cross-link. Basic residues-rich tracts occupy residues 180–203 (SAKK…RKSK) and 215–231 (RSKS…SKRS). Ser-240, Ser-242, Ser-258, Ser-278, Ser-292, and Ser-294 each carry phosphoserine. A compositionally biased stretch (basic and acidic residues) spans 248-271 (RSQEKVGKARSPAEEKMKSEEKGK). Over residues 294 to 303 (SPVDLRDKSK) the composition is skewed to basic and acidic residues. Positions 304–315 (DRRSRSKERKSK) are enriched in basic residues. Residues 316–325 (RSEIDKEKKP) show a composition bias toward basic and acidic residues. Phosphoserine occurs at positions 328, 354, 356, 366, and 368. Residues 342–367 (PSRRPGRSPKRRSLSPKLRDKSRRSR) show a composition bias toward basic residues. Thr-385 carries the phosphothreonine modification. At Ser-387 the chain carries Phosphoserine. Composition is skewed to basic and acidic residues over residues 395 to 408 (RSLE…ERRR) and 415 to 429 (RPRD…RSKD). Ser-427, Ser-431, and Ser-437 each carry phosphoserine. Positions 438–497 (PTRRRSRSPIRRRSRSPLRRSRSPRRRSRSPRRRDRSRRSRSRLRRRSRSRGGHRRRSRS) are enriched in basic residues. Ser-518, Ser-519, Ser-520, Ser-565, Ser-569, Ser-576, Ser-578, and Ser-580 each carry phosphoserine. Residues 518–535 (SSSDDNLEDFDVEEEDEE) show a composition bias toward acidic residues. Residues 562 to 581 (SVPSEPSSPQSSTRSRSPSP) show a composition bias toward low complexity. Glycyl lysine isopeptide (Lys-Gly) (interchain with G-Cter in SUMO2) cross-links involve residues Lys-593 and Lys-659. One can recognise a Protein kinase domain in the interval 687–1006 (YNVYGYTGQG…ALQHAFIQEK (320 aa)). ATP contacts are provided by residues 693–701 (TGQGVFSNV) and Lys-717. Residue Lys-717 is modified to N6-acetyllysine. Asp-815 acts as the Proton acceptor in catalysis. Phosphotyrosine is present on Tyr-849. The residue at position 852 (Ser-852) is a Phosphoserine.

This sequence belongs to the protein kinase superfamily. CMGC Ser/Thr protein kinase family. As to quaternary structure, interacts with CLK1 C-terminus. Associates with the U5 snRNP and NCOR1 deacetylase complexes. Identified in the spliceosome C complex. In terms of processing, phosphorylated by CLK1. Autophosphorylated; phosphorylation inhibits interaction with its targets, such as PRPF6 or SMARCA4.

It is found in the nucleus. The protein resides in the chromosome. Its subcellular location is the centromere. It localises to the kinetochore. It catalyses the reaction L-seryl-[protein] + ATP = O-phospho-L-seryl-[protein] + ADP + H(+). It carries out the reaction L-threonyl-[protein] + ATP = O-phospho-L-threonyl-[protein] + ADP + H(+). Functionally, serine/threonine kinase involved in spliceosomal assembly as well as mitosis and signaling regulation. Connects chromatin mediated regulation of transcription and pre-mRNA splicing. During spliceosomal assembly, interacts with and phosphorylates PRPF6 and PRPF31, components of the U4/U6-U5 tri-small nuclear ribonucleoprotein (snRNP), to facilitate the formation of the spliceosome B complex. Plays a role in regulating transcription and the spindle assembly checkpoint (SAC). Associates with U5 snRNP and NCOR1 deacetylase complexes which may allow a coordination of pre-mRNA splicing with chromatin remodeling events involved in transcriptional regulation. Associates and probably phosphorylates SMARCA4 and NCOR1. Phosphorylates SRSF1. Associates with kinetochores during mitosis and is necessary for recruitment and maintenance of the checkpoint proteins such as MAD1L1 and MAD12L1 at the kinetochores. Phosphorylates and regulates the activity of the transcription factors such as ELK1 and KLF13. Phosphorylates nuclear YAP1 and WWTR1/TAZ which induces nuclear exclusion and regulates Hippo signaling pathway, involved in tissue growth control. The sequence is that of Serine/threonine-protein kinase PRP4 homolog (Prp4k) from Mus musculus (Mouse).